A 479-amino-acid chain; its full sequence is Ribulose bisphosphate carboxylase large chain (479 aa).

Positions 1 to 2 (MS) are excised as a propeptide. N123 and T173 together coordinate substrate. K175 (proton acceptor) is an active-site residue. K177 provides a ligand contact to substrate. Mg(2+) contacts are provided by K201, D203, and E204. At K201 the chain carries N6-carboxylysine. Phosphoserine is present on S208. H294 serves as the catalytic Proton acceptor. Substrate is bound by residues R295 and H327. The residue at position 330 (T330) is a Phosphothreonine. S379 is a binding site for substrate.

This sequence belongs to the RuBisCO large chain family. Type I subfamily. Heterohexadecamer of 8 large chains and 8 small chains; disulfide-linked. The disulfide link is formed within the large subunit homodimers. Requires Mg(2+) as cofactor. Post-translationally, the disulfide bond which can form in the large chain dimeric partners within the hexadecamer appears to be associated with oxidative stress and protein turnover.

Its subcellular location is the plastid. The protein localises to the chloroplast. The enzyme catalyses 2 (2R)-3-phosphoglycerate + 2 H(+) = D-ribulose 1,5-bisphosphate + CO2 + H2O. It catalyses the reaction D-ribulose 1,5-bisphosphate + O2 = 2-phosphoglycolate + (2R)-3-phosphoglycerate + 2 H(+). In terms of biological role, ruBisCO catalyzes two reactions: the carboxylation of D-ribulose 1,5-bisphosphate, the primary event in carbon dioxide fixation, as well as the oxidative fragmentation of the pentose substrate in the photorespiration process. Both reactions occur simultaneously and in competition at the same active site. This is Ribulose bisphosphate carboxylase large chain from Barbarea verna (Land cress).